The following is a 340-amino-acid chain: Phospho-N-acetylmuramoyl-pentapeptide-transferase (340 aa).

Transmembrane regions (helical) follow at residues 24 to 44, 69 to 89, 95 to 115, 129 to 149, 156 to 176, 196 to 216, 235 to 255, 260 to 280, and 316 to 336; these read VPFG…LPVL, TMGG…GSGW, AVAL…WLVI, LLLQ…QGIP, GIGA…VLVG, ALVL…LVAF, LFMG…LALL, WALA…ILQV, and VVGC…AWWH.

It belongs to the glycosyltransferase 4 family. MraY subfamily. Mg(2+) serves as cofactor.

It localises to the cell inner membrane. The catalysed reaction is UDP-N-acetyl-alpha-D-muramoyl-L-alanyl-gamma-D-glutamyl-meso-2,6-diaminopimeloyl-D-alanyl-D-alanine + di-trans,octa-cis-undecaprenyl phosphate = di-trans,octa-cis-undecaprenyl diphospho-N-acetyl-alpha-D-muramoyl-L-alanyl-D-glutamyl-meso-2,6-diaminopimeloyl-D-alanyl-D-alanine + UMP. It functions in the pathway cell wall biogenesis; peptidoglycan biosynthesis. Catalyzes the initial step of the lipid cycle reactions in the biosynthesis of the cell wall peptidoglycan: transfers peptidoglycan precursor phospho-MurNAc-pentapeptide from UDP-MurNAc-pentapeptide onto the lipid carrier undecaprenyl phosphate, yielding undecaprenyl-pyrophosphoryl-MurNAc-pentapeptide, known as lipid I. The protein is Phospho-N-acetylmuramoyl-pentapeptide-transferase of Synechococcus sp. (strain JA-3-3Ab) (Cyanobacteria bacterium Yellowstone A-Prime).